We begin with the raw amino-acid sequence, 531 residues long: MSVDPKTLNKQVAKRRTFAIISHPDAGKTTMTEKLLLWGQAIQVAGEVKGRKTDRHATSDWMSMEQERGISITTSVMQFPYKDHIVNLLDTPGHADFSEDTYRTLTAVDSALMMVDGAKGVEERTIKLMEVCRMRDTPIISFVNKLDRQIRDPLELLDEIETVLGIKCVPVTWPIGMGQDFVGVYHLTEDKTYLYKKGHGGEITEIETREGYDYPDVRQRLGELAFSAFEESLELVQMALENFDVDLFLKGEMTPVLFGTALGNFGVNMVLDTLIEHAPPPKSHPTNERIVAADETSFSGFVFKIQANMDPRHRDRIAFLRVCSGKYEKGMKMKHVRLGKDVRISDALTFLAGDREALEEAYPGDIIGLHNHGTISIGDSFTEGEELNFTGIPHFAPELFRRVVLKDPLKSKALQKGLQQLSEEGATQVFMPQINNDLILGAVGVLQFEVVAHRLKEEYKVQCIFEPVSIATVRWIHCDDEAILAKFKKKAHDQLSVDGGGHLTYLAPSRVNLQLMQERYPEVTFSNTREH.

The region spanning 13–282 (AKRRTFAIIS…TLIEHAPPPK (270 aa)) is the tr-type G domain. Residues 22 to 29 (SHPDAGKT), 90 to 94 (DTPGH), and 144 to 147 (NKLD) each bind GTP.

This sequence belongs to the TRAFAC class translation factor GTPase superfamily. Classic translation factor GTPase family. PrfC subfamily.

It is found in the cytoplasm. Functionally, increases the formation of ribosomal termination complexes and stimulates activities of RF-1 and RF-2. It binds guanine nucleotides and has strong preference for UGA stop codons. It may interact directly with the ribosome. The stimulation of RF-1 and RF-2 is significantly reduced by GTP and GDP, but not by GMP. In Psychrobacter sp. (strain PRwf-1), this protein is Peptide chain release factor 3.